The primary structure comprises 108 residues: Nucleoid-associated protein ACP_0492 (108 aa).

Belongs to the YbaB/EbfC family. As to quaternary structure, homodimer.

Its subcellular location is the cytoplasm. The protein resides in the nucleoid. Functionally, binds to DNA and alters its conformation. May be involved in regulation of gene expression, nucleoid organization and DNA protection. The chain is Nucleoid-associated protein ACP_0492 from Acidobacterium capsulatum (strain ATCC 51196 / DSM 11244 / BCRC 80197 / JCM 7670 / NBRC 15755 / NCIMB 13165 / 161).